Consider the following 96-residue polypeptide: Evasin P1100 (96 aa).

Positions 1–28 (MAFNVITFLQFSVFVVILFNINLHSASA) are cleaved as a signal peptide. Cystine bridges form between C48-C67, C52-C69, and C63-C80. The N-linked (GlcNAc...) asparagine glycan is linked to N51. N-linked (GlcNAc...) asparagine glycosylation is present at N74.

It localises to the secreted. Its function is as follows. Salivary chemokine-binding protein which binds to host chemokines CXCL1, CXCL2, CXCL3, CXCL5, CXCL6, CXCL10, CXCL11 and CXCL13. This is Evasin P1100 from Ixodes ricinus (Common tick).